The following is a 419-amino-acid chain: Serine hydroxymethyltransferase (419 aa).

(6S)-5,6,7,8-tetrahydrofolate contacts are provided by residues Leu121 and 125–127; that span reads GHL. Lys230 bears the N6-(pyridoxal phosphate)lysine mark. 355-357 lines the (6S)-5,6,7,8-tetrahydrofolate pocket; the sequence is SPF.

Belongs to the SHMT family. In terms of assembly, homodimer. Requires pyridoxal 5'-phosphate as cofactor.

The protein localises to the cytoplasm. The catalysed reaction is (6R)-5,10-methylene-5,6,7,8-tetrahydrofolate + glycine + H2O = (6S)-5,6,7,8-tetrahydrofolate + L-serine. The protein operates within one-carbon metabolism; tetrahydrofolate interconversion. It functions in the pathway amino-acid biosynthesis; glycine biosynthesis; glycine from L-serine: step 1/1. In terms of biological role, catalyzes the reversible interconversion of serine and glycine with tetrahydrofolate (THF) serving as the one-carbon carrier. This reaction serves as the major source of one-carbon groups required for the biosynthesis of purines, thymidylate, methionine, and other important biomolecules. Also exhibits THF-independent aldolase activity toward beta-hydroxyamino acids, producing glycine and aldehydes, via a retro-aldol mechanism. This Streptococcus uberis (strain ATCC BAA-854 / 0140J) protein is Serine hydroxymethyltransferase.